A 157-amino-acid chain; its full sequence is uncharacterized protein (157 aa).

A compositionally biased stretch (basic and acidic residues) spans 1–11; it reads MGDLEGQDRPD. Residues 1-22 are disordered; it reads MGDLEGQDRPDPISTMVGPSGT.

Its subcellular location is the mitochondrion. This is an uncharacterized protein from Arabidopsis thaliana (Mouse-ear cress).